Here is a 329-residue protein sequence, read N- to C-terminus: MLESMYYEFFFIFPKERELFESFLLDATDLALEESSLEDLKAFDDKETIGFISQSSWRYFATHGPLKEDLKEKLPHLDHFVILRSEKDLNSSLIPALESFCLSLQENLQNEFDFFYLSRNLASKDWLEAYKQAILPVQCGKFYIHPSWHQKPSHIATDFSIMIDPALAFGSGHHESTSMCLELLSNLDLKHKNALDVGCGSGILSIALKKQGVSTLVACDTDSLAIEETLKNFSLNQISLSTQDEIICGSTQKIQGHFDIIVANIVADVIKSLYSEFVRLCNHTLILSGILETHLNSVLQIYYNGFEILEQQQRNEWVALKLLKKQSIN.

Residues threonine 177, glycine 198, aspartate 220, and asparagine 264 each coordinate S-adenosyl-L-methionine.

This sequence belongs to the methyltransferase superfamily. PrmA family.

Its subcellular location is the cytoplasm. It carries out the reaction L-lysyl-[protein] + 3 S-adenosyl-L-methionine = N(6),N(6),N(6)-trimethyl-L-lysyl-[protein] + 3 S-adenosyl-L-homocysteine + 3 H(+). Its function is as follows. Methylates ribosomal protein L11. In Helicobacter acinonychis (strain Sheeba), this protein is Ribosomal protein L11 methyltransferase.